Here is a 534-residue protein sequence, read N- to C-terminus: BEN domain-containing protein 4 (534 aa).

Disordered regions lie at residues 1–24, 48–128, and 287–322; these read MEEE…RSPY, ELPH…AASS, and VHTL…EEGY. The segment covering 53–63 has biased composition (pro residues); sequence RAPPPPPPPFA. The segment covering 69–83 has biased composition (polar residues); sequence SISSSEPPPQQFQAQ. Residues 91–109 show a composition bias toward low complexity; the sequence is GRAAAAASSSSPSCTPATS. Polar residues predominate over residues 295–310; it reads SPATSESHGHPSSSTL. Residues 311–321 show a composition bias toward acidic residues; sequence PEEEEEEDEEG. Residues 324–351 adopt a coiled-coil conformation; that stretch reads PRCQELEQEVISLQQENEELRRKLESIP. Positions 390–498 constitute a BEN domain; the sequence is NYPVYITSKQ…DAVGHARQGR (109 aa).

The chain is BEN domain-containing protein 4 (BEND4) from Homo sapiens (Human).